The sequence spans 208 residues: Adenylyl-sulfate kinase 3 (208 aa).

37–45 is a binding site for ATP; the sequence is GLSGSGKST. Substrate is bound by residues D67, R70, R84, N87, 110–111, and G160; that span reads IS. Residue S111 is the Phosphoserine intermediate of the active site.

This sequence belongs to the APS kinase family. In terms of tissue distribution, expressed in root vasculature, root tips, leaf epidermal and guard cells, pollen grains and radicle of immature seeds.

Its subcellular location is the cytoplasm. The protein resides in the cytosol. It carries out the reaction adenosine 5'-phosphosulfate + ATP = 3'-phosphoadenylyl sulfate + ADP + H(+). Its pathway is sulfur metabolism; hydrogen sulfide biosynthesis; sulfite from sulfate: step 2/3. Its function is as follows. Catalyzes the synthesis of activated sulfate for the sulfation of secondary metabolites, including the glucosinolates. Essential for plant reproduction and viability. The chain is Adenylyl-sulfate kinase 3 from Arabidopsis thaliana (Mouse-ear cress).